A 433-amino-acid chain; its full sequence is Trigger factor (433 aa).

A PPIase FKBP-type domain is found at 163 to 248; that stretch reads GDTVNIDFSG…VNEIKFKDVP (86 aa).

The protein belongs to the FKBP-type PPIase family. Tig subfamily.

The protein resides in the cytoplasm. The enzyme catalyses [protein]-peptidylproline (omega=180) = [protein]-peptidylproline (omega=0). Involved in protein export. Acts as a chaperone by maintaining the newly synthesized protein in an open conformation. Functions as a peptidyl-prolyl cis-trans isomerase. The polypeptide is Trigger factor (Staphylococcus epidermidis (strain ATCC 35984 / DSM 28319 / BCRC 17069 / CCUG 31568 / BM 3577 / RP62A)).